The following is a 208-amino-acid chain: MVSRRVQALLDQLRAQGIQDEQVLNALAAVPREKFVDEAFEQKAWDNIALPIGQGQTISQPYMVARMTELLELTPQSRVLEIGTGSGYQTAILAHLVQHVCSVERIKGLQWQARRRLKNLDLHNVSTRHGDGWQGWQARAPFDAIIVTAAPPEIPTALMTQLDEGGILVLPVGEEHQYLKRVRRRGGEFIIDTVEAVRFVPLVKGELA.

Ser-59 is a catalytic residue.

Belongs to the methyltransferase superfamily. L-isoaspartyl/D-aspartyl protein methyltransferase family.

It is found in the cytoplasm. It catalyses the reaction [protein]-L-isoaspartate + S-adenosyl-L-methionine = [protein]-L-isoaspartate alpha-methyl ester + S-adenosyl-L-homocysteine. In terms of biological role, catalyzes the methyl esterification of L-isoaspartyl residues in peptides and proteins that result from spontaneous decomposition of normal L-aspartyl and L-asparaginyl residues. It plays a role in the repair and/or degradation of damaged proteins. The sequence is that of Protein-L-isoaspartate O-methyltransferase from Escherichia coli (strain K12 / MC4100 / BW2952).